The following is a 301-amino-acid chain: Glycine--tRNA ligase alpha subunit (301 aa).

Belongs to the class-II aminoacyl-tRNA synthetase family. Tetramer of two alpha and two beta subunits.

It is found in the cytoplasm. The catalysed reaction is tRNA(Gly) + glycine + ATP = glycyl-tRNA(Gly) + AMP + diphosphate. The chain is Glycine--tRNA ligase alpha subunit from Shewanella piezotolerans (strain WP3 / JCM 13877).